A 461-amino-acid polypeptide reads, in one-letter code: Phosphoenolpyruvate carboxylase (461 aa).

This sequence belongs to the PEPCase type 2 family. In terms of assembly, homotetramer. Requires Mg(2+) as cofactor.

It catalyses the reaction oxaloacetate + phosphate = phosphoenolpyruvate + hydrogencarbonate. Its function is as follows. Catalyzes the irreversible beta-carboxylation of phosphoenolpyruvate (PEP) to form oxaloacetate (OAA), a four-carbon dicarboxylic acid source for the tricarboxylic acid cycle. The chain is Phosphoenolpyruvate carboxylase from Pyrobaculum islandicum (strain DSM 4184 / JCM 9189 / GEO3).